The primary structure comprises 82 residues: Turripeptide IX-04 (82 aa).

The signal sequence occupies residues 1 to 21 (MGFYMLLTVALLLTSLMNVEA). Positions 22–39 (TPVDQAERSALEKSGLGN) are excised as a propeptide. 3 disulfides stabilise this stretch: Cys-48–Cys-70, Cys-55–Cys-74, and Cys-60–Cys-81.

In terms of tissue distribution, expressed by the venom duct.

The protein localises to the secreted. The protein is Turripeptide IX-04 of Gemmula speciosa (Splendid gem-turris).